The chain runs to 95 residues: DNA-directed RNA polymerase subunit Rpo11 (95 aa).

It belongs to the archaeal Rpo11/eukaryotic RPB11/RPC19 RNA polymerase subunit family. In terms of assembly, part of the RNA polymerase complex.

It is found in the cytoplasm. The enzyme catalyses RNA(n) + a ribonucleoside 5'-triphosphate = RNA(n+1) + diphosphate. Its function is as follows. DNA-dependent RNA polymerase (RNAP) catalyzes the transcription of DNA into RNA using the four ribonucleoside triphosphates as substrates. This chain is DNA-directed RNA polymerase subunit Rpo11, found in Methanococcus vannielii (strain ATCC 35089 / DSM 1224 / JCM 13029 / OCM 148 / SB).